Reading from the N-terminus, the 1582-residue chain is SET-binding protein (1582 aa).

Disordered regions lie at residues 1–76, 124–246, 278–416, and 446–513; these read MEPR…WVAG, ITIK…KVPA, LLGS…KRQS, and SNSE…KLSE. A compositionally biased stretch (polar residues) spans 18-27; the sequence is EFLQGSSSRS. Residues 57–74 show a composition bias toward basic and acidic residues; the sequence is GSGRDVDCNSNADSEKWV. 2 stretches are compositionally biased toward polar residues: residues 126 to 141 and 213 to 229; these read IKQS…GKNS and MEWS…QNCF. The segment covering 278-298 has biased composition (low complexity); sequence LLGSVVPSPSSHNSPATPSSS. Basic and acidic residues predominate over residues 356-365; it reads ETTEGKREAY. The segment covering 368–388 has biased composition (polar residues); it reads DSAQEASPARQSISSVSNPEN. Over residues 450-465 the composition is skewed to basic and acidic residues; the sequence is GSKKDPRVPKLGKMIE. The a.T hook 1 DNA-binding region spans 575–587; it reads KKKRGRPKKQPLL. Disordered regions lie at residues 595-617 and 709-787; these read GTST…RKRR and RGTI…ASTE. The segment covering 770 to 787 has biased composition (polar residues); sequence LSTQLGGSNGNLSPASTE. The residue at position 808 (Lys-808) is an N6-acetyllysine. The span at 845 to 871 shows a compositional bias: polar residues; that stretch reads SPVSESHSEETIPSDSGIGTDNNSTSD. Positions 845–880 are disordered; sequence SPVSESHSEETIPSDSGIGTDNNSTSDQAEKSSESR. A DNA-binding region (a.T hook 2) is located at residues 1007-1019; sequence KKKRGRPAKTNDT. 6 disordered regions span residues 1128 to 1155, 1182 to 1215, 1236 to 1265, 1429 to 1461, 1470 to 1489, and 1507 to 1582; these read VGGA…DRIL, SGSD…VSKN, AKDK…TRSE, QRQS…RDQM, LPSK…EPAS, and EAPP…DVLP. Over residues 1137-1150 the composition is skewed to basic residues; the sequence is RLHKRKHKHKRKHK. Residues 1182 to 1196 show a composition bias toward basic and acidic residues; that stretch reads SGSDKELPLVSEKSK. Positions 1439–1448 are enriched in basic residues; that stretch reads VKKRRGRPRK. The a.T hook 3 DNA-binding region spans 1440–1452; it reads KKRRGRPRKQPSQ. Pro residues-rich tracts occupy residues 1509-1533 and 1546-1559; these read PPLP…PPLP and QPPA…PQPL.

As to quaternary structure, interacts with SET.

Its subcellular location is the nucleus. In Mus musculus (Mouse), this protein is SET-binding protein (Setbp1).